We begin with the raw amino-acid sequence, 361 residues long: Alternative oxidase, mitochondrial (361 aa).

The chain crosses the membrane as a helical span at residues 156–178 (YLVRNVFLESVAGVPGMVAGMLR). Glutamate 164, glutamate 203, and histidine 206 together coordinate Fe cation. The helical transmembrane segment at 218–240 (WFMRLAVLGAQGVFFNAMFLSYL) threads the bilayer. Fe cation is bound by residues glutamate 254, glutamate 309, and histidine 312. Positions 318–328 (TLGNLDQNSDP) are enriched in polar residues. Residues 318 to 361 (TLGNLDQNSDPNPYASKYDNPNVPHPRKDIKYLKPSGWEREEVM) are disordered. The span at 343–361 (PRKDIKYLKPSGWEREEVM) shows a compositional bias: basic and acidic residues.

This sequence belongs to the alternative oxidase family. Requires Fe cation as cofactor.

It is found in the mitochondrion inner membrane. In terms of biological role, catalyzes cyanide-resistant oxygen consumption. May increase respiration when the cytochrome respiratory pathway is restricted, or in response to low temperatures. The sequence is that of Alternative oxidase, mitochondrial (AOX1) from Venturia inaequalis (Apple scab fungus).